A 408-amino-acid chain; its full sequence is tRNA wybutosine-synthesizing protein 2 homolog (408 aa).

S-adenosyl-L-methionine-binding positions include serine 201, lysine 208, glutamate 248, and 276-277 (DN).

The protein belongs to the class I-like SAM-binding methyltransferase superfamily. TRM5/TYW2 family.

It catalyses the reaction 4-demethylwyosine(37) in tRNA(Phe) + S-adenosyl-L-methionine = 4-demethyl-7-[(3S)-3-amino-3-carboxypropyl]wyosine(37) in tRNA(Phe) + S-methyl-5'-thioadenosine + H(+). It functions in the pathway tRNA modification; wybutosine-tRNA(Phe) biosynthesis. Its function is as follows. S-adenosyl-L-methionine-dependent transferase that acts as a component of the wybutosine biosynthesis pathway. Wybutosine is a hyper modified guanosine with a tricyclic base found at the 3'-position adjacent to the anticodon of eukaryotic phenylalanine tRNA. Catalyzes the transfer of the alpha-amino-alpha-carboxypropyl (acp) group from S-adenosyl-L-methionine to the C-7 position of 4-demethylwyosine (imG-14) to produce wybutosine-86. This Danio rerio (Zebrafish) protein is tRNA wybutosine-synthesizing protein 2 homolog (trmt12).